Consider the following 944-residue polypeptide: Translation initiation factor IF-2 (944 aa).

2 disordered regions span residues 50–91 and 114–349; these read SAKT…FAGK and KVEV…VPAT. Basic and acidic residues-rich tracts occupy residues 75–86, 124–157, 164–185, and 199–233; these read ESAKKNKEDHPR, VVTE…ETKD, AEVK…EKKK, and KRAE…DNRR. Residues 267 to 280 show a composition bias toward polar residues; that stretch reads SSGSAPATDSFTPA. The span at 286–307 shows a compositional bias: basic and acidic residues; it reads SRRDRDRKKSDNNRDNTKDGNR. 2 stretches are compositionally biased toward polar residues: residues 317 to 331 and 338 to 348; these read NRNQ…NWNQ and YQNNQSSSVPA. The region spanning 443-614 is the tr-type G domain; that stretch reads ERPAVVTIMG…LLVAEVQELK (172 aa). A G1 region spans residues 452–459; it reads GHVDHGKT. 452–459 lines the GTP pocket; it reads GHVDHGKT. The interval 477 to 481 is G2; sequence GITQH. The tract at residues 498 to 501 is G3; it reads DTPG. GTP is bound by residues 498-502 and 552-555; these read DTPGH and NKID. The interval 552-555 is G4; the sequence is NKID. Residues 590-592 form a G5 region; the sequence is SAK.

This sequence belongs to the TRAFAC class translation factor GTPase superfamily. Classic translation factor GTPase family. IF-2 subfamily.

The protein resides in the cytoplasm. In terms of biological role, one of the essential components for the initiation of protein synthesis. Protects formylmethionyl-tRNA from spontaneous hydrolysis and promotes its binding to the 30S ribosomal subunits. Also involved in the hydrolysis of GTP during the formation of the 70S ribosomal complex. This is Translation initiation factor IF-2 (infB) from Lactococcus lactis subsp. lactis (strain IL1403) (Streptococcus lactis).